Here is a 240-residue protein sequence, read N- to C-terminus: Ribosomal RNA small subunit methyltransferase G (240 aa).

S-adenosyl-L-methionine is bound by residues G79, 130-131 (AE), and R149.

It belongs to the methyltransferase superfamily. RNA methyltransferase RsmG family.

The protein resides in the cytoplasm. Functionally, specifically methylates the N7 position of a guanine in 16S rRNA. This Moorella thermoacetica (strain ATCC 39073 / JCM 9320) protein is Ribosomal RNA small subunit methyltransferase G.